Reading from the N-terminus, the 156-residue chain is Transcription elongation factor GreA (156 aa).

Residues 1–84 (MAKYTISKHR…IEDVMRSTDE (84 aa)) adopt a coiled-coil conformation.

Belongs to the GreA/GreB family.

Necessary for efficient RNA polymerase transcription elongation past template-encoded arresting sites. The arresting sites in DNA have the property of trapping a certain fraction of elongating RNA polymerases that pass through, resulting in locked ternary complexes. Cleavage of the nascent transcript by cleavage factors such as GreA or GreB allows the resumption of elongation from the new 3'terminus. GreA releases sequences of 2 to 3 nucleotides. The polypeptide is Transcription elongation factor GreA (Ureaplasma urealyticum serovar 10 (strain ATCC 33699 / Western)).